The chain runs to 424 residues: Histidine--tRNA ligase (424 aa).

The protein belongs to the class-II aminoacyl-tRNA synthetase family. In terms of assembly, homodimer.

The protein resides in the cytoplasm. The catalysed reaction is tRNA(His) + L-histidine + ATP = L-histidyl-tRNA(His) + AMP + diphosphate + H(+). The protein is Histidine--tRNA ligase of Shewanella pealeana (strain ATCC 700345 / ANG-SQ1).